The primary structure comprises 313 residues: D-alanine--D-alanine ligase (313 aa).

The ATP-grasp domain occupies 114-309 (KWLWKGVGLP…FSKLVLKLIS (196 aa)). 142–195 (DLTFPVIVKPSHEGSSIGMRKVDTLDALQEAVDFAQQYDSEILIEQWITGREFT) is a binding site for ATP. Mg(2+)-binding residues include D263, E276, and N278.

Belongs to the D-alanine--D-alanine ligase family. Mg(2+) is required as a cofactor. It depends on Mn(2+) as a cofactor.

It is found in the cytoplasm. The catalysed reaction is 2 D-alanine + ATP = D-alanyl-D-alanine + ADP + phosphate + H(+). It functions in the pathway cell wall biogenesis; peptidoglycan biosynthesis. Cell wall formation. This chain is D-alanine--D-alanine ligase, found in Hydrogenovibrio crunogenus (strain DSM 25203 / XCL-2) (Thiomicrospira crunogena).